A 106-amino-acid polypeptide reads, in one-letter code: MKQDIYINIKAFDCSLLEECVRKFVDELKRSSAKLSGPIALPRKDSKFIVNRSPHVDKKSREQFEMRTSRRLIVLHDLTPTMMQMLTGLSFSAGVEVDLKVKEVKV.

It belongs to the universal ribosomal protein uS10 family. As to quaternary structure, part of the 30S ribosomal subunit.

In terms of biological role, involved in the binding of tRNA to the ribosomes. The protein is Small ribosomal subunit protein uS10 of Wolbachia sp. subsp. Drosophila simulans (strain wRi).